Reading from the N-terminus, the 1092-residue chain is Fibrinogen-binding protein (1092 aa).

The signal sequence occupies residues Met1–Ala51. The segment covering Lys50–Asn63 has biased composition (basic and acidic residues). Residues Lys50–Ser236 are disordered. The segment at Glu52–Glu599 is ligand binding A region. Over residues Thr64–Ser76 the composition is skewed to acidic residues. The span at Ile84–Ile98 shows a compositional bias: low complexity. Residues Ile99–Glu119 show a composition bias toward basic and acidic residues. The segment covering Ser120–Thr140 has biased composition (polar residues). The segment covering His141–Ser151 has biased composition (basic and acidic residues). The span at Ile160–Thr170 shows a compositional bias: polar residues. The span at Lys195–Ser220 shows a compositional bias: basic and acidic residues. Positions 294, 299, 302, and 309 each coordinate Ca(2+). The tract at residues Tyr579–Gly590 is interaction with human fibrinogen. 2 CNA-B domains span residues Lys600–Pro713 and Lys714–Glu824. A disordered region spans residues Lys780–Leu1068. Residues Ser791 to Gly801 show a composition bias toward acidic residues. Residues Glu802 to Phe814 show a composition bias toward basic and acidic residues. Acidic residues predominate over residues Tyr820–Ser1039. An LPXTG sorting signal motif is present at residues Leu1053 to Gly1057. Thr1056 carries the post-translational modification Pentaglycyl murein peptidoglycan amidated threonine. A propeptide spans Gly1057–Asn1092 (removed by sortase).

The protein belongs to the serine-aspartate repeat-containing protein (SDr) family.

The protein localises to the secreted. It is found in the cell wall. Promotes bacterial attachment to both soluble and immobilized forms of fibrinogen in a dose-dependent manner. This binding occurs through the beta-chain of human fibrinogen. Could contribute to the initiation of foreign-body infection by allowing bacteria to adhere to biomaterial surfaces that have become coated with host proteins after implantation. Is important in the pathogenesis of central venous catheter (CVC)-associated infection model. The chain is Fibrinogen-binding protein (fbe) from Staphylococcus epidermidis.